A 72-amino-acid chain; its full sequence is MWLLKRIVIFPIWVYQVALAPYLTPCCRFQPTCSAYAHEAINKHGIVKGIWLAGKRILRCHPCGKSGYDPVQ.

It belongs to the UPF0161 family.

The protein localises to the cell inner membrane. Its function is as follows. Could be involved in insertion of integral membrane proteins into the membrane. The polypeptide is Putative membrane protein insertion efficiency factor (Amoebophilus asiaticus (strain 5a2)).